The primary structure comprises 314 residues: Cytochrome f (314 aa).

The signal sequence occupies residues 1–30; it reads MATNKFFKSLLFALTIAINSFGFCIQDAVA. 4 residues coordinate heme: Y31, C51, C54, and H55. The chain crosses the membrane as a helical span at residues 280–300; sequence IYGYLAFCFSVLITQIMLVLK.

Belongs to the cytochrome f family. In terms of assembly, the 4 large subunits of the cytochrome b6-f complex are cytochrome b6, subunit IV (17 kDa polypeptide, petD), cytochrome f and the Rieske protein, while the 4 small subunits are PetG, PetL, PetM and PetN. The complex functions as a dimer. Heme serves as cofactor.

Its subcellular location is the plastid. The protein resides in the chloroplast thylakoid membrane. Component of the cytochrome b6-f complex, which mediates electron transfer between photosystem II (PSII) and photosystem I (PSI), cyclic electron flow around PSI, and state transitions. This chain is Cytochrome f, found in Phaeodactylum tricornutum (strain CCAP 1055/1).